The chain runs to 42 residues: Protein YkgS (42 aa).

This is Protein YkgS (ykgS) from Escherichia coli (strain K12).